A 490-amino-acid chain; its full sequence is MDSLVVLVLCLSCLLLLSLWRQSSGRGKLPPGPTPLPVIGNILQIGIKDISKSLTNLSKVYGPVFTLYFGLKPIVVLHGYEAVKEALIDLGEEFSGRGIFPLAERANRGFGIVFSNGKKWKEIRRFSLMTLRNFGMGKRSIEDRVQEEARCLVEELRKTKASPCDPTFILGCAPCNVICSIIFHKRFDYKDQQFLNLMEKLNENIKILSSPWIQICNNFSPIIDYFPGTHNKLLKNVAFMKSYILEKVKEHQESMDMNNPQDFIDCFLMKMEKEKHNQPSEFTIESLENTAVDLFGAGTETTSTTLRYALLLLLKHPEVTAKVQEEIERVIGRNRSPCMQDRSHMPYTDAVVHEVQRYIDLLPTSLPHAVTCDIKFRNYLIPKGTTILISLTSVLHDNKEFPNPEMFDPHHFLDEGGNFKKSKYFMPFSAGKRICVGEALAGMELFLFLTSILQNFNLKSLVDPKNLDTTPVVNGFASVPPFYQLCFIPV.

Cysteine 435 contacts heme.

It belongs to the cytochrome P450 family. It depends on heme as a cofactor.

Its subcellular location is the endoplasmic reticulum membrane. The protein localises to the microsome membrane. The catalysed reaction is an organic molecule + reduced [NADPH--hemoprotein reductase] + O2 = an alcohol + oxidized [NADPH--hemoprotein reductase] + H2O + H(+). It carries out the reaction (5Z,8Z,11Z,14Z)-eicosatetraenoate + reduced [NADPH--hemoprotein reductase] + O2 = (8R,9S)-epoxy-(5Z,11Z,14Z)-eicosatrienoate + oxidized [NADPH--hemoprotein reductase] + H2O + H(+). The enzyme catalyses (5Z,8Z,11Z,14Z)-eicosatetraenoate + reduced [NADPH--hemoprotein reductase] + O2 = (8S,9R)-epoxy-(5Z,11Z,14Z)-eicosatrienoate + oxidized [NADPH--hemoprotein reductase] + H2O + H(+). It catalyses the reaction (5Z,8Z,11Z,14Z)-eicosatetraenoate + reduced [NADPH--hemoprotein reductase] + O2 = (11R,12S)-epoxy-(5Z,8Z,14Z)-eicosatrienoate + oxidized [NADPH--hemoprotein reductase] + H2O + H(+). The catalysed reaction is (5Z,8Z,11Z,14Z)-eicosatetraenoate + reduced [NADPH--hemoprotein reductase] + O2 = (11S,12R)-epoxy-(5Z,8Z,14Z)-eicosatrienoate + oxidized [NADPH--hemoprotein reductase] + H2O + H(+). It carries out the reaction (5Z,8Z,11Z,14Z)-eicosatetraenoate + reduced [NADPH--hemoprotein reductase] + O2 = (14R,15S)-epoxy-(5Z,8Z,11Z)-eicosatrienoate + oxidized [NADPH--hemoprotein reductase] + H2O + H(+). The enzyme catalyses (5Z,8Z,11Z,14Z)-eicosatetraenoate + reduced [NADPH--hemoprotein reductase] + O2 = (14S,15R)-epoxy-(5Z,8Z,11Z)-eicosatrienoate + oxidized [NADPH--hemoprotein reductase] + H2O + H(+). It catalyses the reaction (5Z,8Z,11Z,14Z,17Z)-eicosapentaenoate + reduced [NADPH--hemoprotein reductase] + O2 = 8,9-epoxy-(5Z,11Z,14Z,17Z)-eicosatetraenoate + oxidized [NADPH--hemoprotein reductase] + H2O + H(+). The catalysed reaction is (5Z,8Z,11Z,14Z,17Z)-eicosapentaenoate + reduced [NADPH--hemoprotein reductase] + O2 = 11,12-epoxy-(5Z,8Z,14Z,17Z)-eicosatetraenoate + oxidized [NADPH--hemoprotein reductase] + H2O + H(+). It carries out the reaction (5Z,8Z,11Z,14Z,17Z)-eicosapentaenoate + reduced [NADPH--hemoprotein reductase] + O2 = 14,15-epoxy-(5Z,8Z,11Z,17Z)-eicosatetraenoate + oxidized [NADPH--hemoprotein reductase] + H2O + H(+). The enzyme catalyses (5Z,8Z,11Z,14Z,17Z)-eicosapentaenoate + reduced [NADPH--hemoprotein reductase] + O2 = (17R,18S)-epoxy-(5Z,8Z,11Z,14Z)-eicosatetraenoate + oxidized [NADPH--hemoprotein reductase] + H2O + H(+). It catalyses the reaction cholesterol + reduced [NADPH--hemoprotein reductase] + O2 = 25-hydroxycholesterol + oxidized [NADPH--hemoprotein reductase] + H2O + H(+). The catalysed reaction is 17beta-estradiol + reduced [NADPH--hemoprotein reductase] + O2 = 2-hydroxy-17beta-estradiol + oxidized [NADPH--hemoprotein reductase] + H2O + H(+). It carries out the reaction estrone + reduced [NADPH--hemoprotein reductase] + O2 = 2-hydroxyestrone + oxidized [NADPH--hemoprotein reductase] + H2O + H(+). The enzyme catalyses (5Z,8Z,11Z,14Z)-eicosatetraenoate + reduced [NADPH--hemoprotein reductase] + O2 = (11R)-hydroxy-(5Z,8Z,12E,14Z)-eicosatetraenoate + oxidized [NADPH--hemoprotein reductase] + H2O + H(+). It catalyses the reaction (5Z,8Z,11Z,14Z)-eicosatetraenoate + reduced [NADPH--hemoprotein reductase] + O2 = (12R)-hydroxy-(5Z,8Z,10E,14Z)-eicosatetraenoate + oxidized [NADPH--hemoprotein reductase] + H2O + H(+). The catalysed reaction is (5Z,8Z,11Z,14Z)-eicosatetraenoate + reduced [NADPH--hemoprotein reductase] + O2 = (15R)-hydroxy-(5Z,8Z,11Z,13E)-eicosatetraenoate + oxidized [NADPH--hemoprotein reductase] + H2O + H(+). It carries out the reaction (5Z,8Z,11Z,14Z)-eicosatetraenoate + reduced [NADPH--hemoprotein reductase] + O2 = 10-hydroxy-(5Z,8Z,11Z,14Z)-eicosatetraenoate + oxidized [NADPH--hemoprotein reductase] + H2O + H(+). The enzyme catalyses (9Z,12Z)-octadecadienoate + reduced [NADPH--hemoprotein reductase] + O2 = (13R)-hydroxy-(9Z,11E)-octadecadienoate + oxidized [NADPH--hemoprotein reductase] + H2O + H(+). It catalyses the reaction (9Z,12Z)-octadecadienoate + reduced [NADPH--hemoprotein reductase] + O2 = (9R)-hydroxy-(10E,12Z)-octadecadienoate + oxidized [NADPH--hemoprotein reductase] + H2O + H(+). The catalysed reaction is (5Z,8Z,11Z,14Z)-eicosatetraenoate + reduced [NADPH--hemoprotein reductase] + O2 = 19-hydroxy-(5Z,8Z,11Z,14Z)-eicosatetraenoate + oxidized [NADPH--hemoprotein reductase] + H2O + H(+). It carries out the reaction (5Z,8Z,11Z,14Z)-eicosatetraenoate + reduced [NADPH--hemoprotein reductase] + O2 = 13(S)-hydroxy-(5Z,8Z,11Z,14Z)-eicosatetraenoate + oxidized [NADPH--hemoprotein reductase] + H2O + H(+). The enzyme catalyses (5Z,8Z,11Z,14Z)-eicosatetraenoate + reduced [NADPH--hemoprotein reductase] + O2 = 14,15-epoxy-(5Z,8Z,11Z)-eicosatrienoate + oxidized [NADPH--hemoprotein reductase] + H2O + H(+). It catalyses the reaction (5Z,8Z,11Z,14Z)-eicosatetraenoate + reduced [NADPH--hemoprotein reductase] + O2 = 11,12-epoxy-(5Z,8Z,14Z)-eicosatrienoate + oxidized [NADPH--hemoprotein reductase] + H2O + H(+). The catalysed reaction is (5Z,8Z,11Z,14Z)-eicosatetraenoate + reduced [NADPH--hemoprotein reductase] + O2 = 13-hydroxy-(5Z,8Z,11Z,14Z)-eicosatetraenoate + oxidized [NADPH--hemoprotein reductase] + H2O + H(+). It carries out the reaction (4R)-limonene + reduced [NADPH--hemoprotein reductase] + O2 = (1R,5S)-carveol + oxidized [NADPH--hemoprotein reductase] + H2O + H(+). The enzyme catalyses (4S)-limonene + reduced [NADPH--hemoprotein reductase] + O2 = (1S,5R)-carveol + oxidized [NADPH--hemoprotein reductase] + H2O + H(+). It catalyses the reaction (4S)-limonene + reduced [NADPH--hemoprotein reductase] + O2 = (4S)-perillyl alcohol + oxidized [NADPH--hemoprotein reductase] + H2O + H(+). Its pathway is lipid metabolism; arachidonate metabolism. It participates in steroid metabolism; cholesterol metabolism. The protein operates within terpene metabolism; (4R)-limonene degradation. A cytochrome P450 monooxygenase involved in the metabolism of various endogenous substrates, including fatty acids and steroids. Mechanistically, uses molecular oxygen inserting one oxygen atom into a substrate, and reducing the second into a water molecule, with two electrons provided by NADPH via cytochrome P450 reductase (NADPH--hemoprotein reductase). Catalyzes the epoxidation of double bonds of polyunsaturated fatty acids (PUFA). Catalyzes the hydroxylation of carbon-hydrogen bonds. Metabolizes cholesterol toward 25-hydroxycholesterol, a physiological regulator of cellular cholesterol homeostasis. Exhibits low catalytic activity for the formation of catechol estrogens from 17beta-estradiol (E2) and estrone (E1), namely 2-hydroxy E1 and E2. Catalyzes bisallylic hydroxylation and hydroxylation with double-bond migration of polyunsaturated fatty acids (PUFA). Also metabolizes plant monoterpenes such as limonene. Oxygenates (R)- and (S)-limonene to produce carveol and perillyl alcohol. Contributes to the wide pharmacokinetics variability of the metabolism of drugs such as S-warfarin, diclofenac, phenytoin, tolbutamide and losartan. This is Cytochrome P450 2C9 from Homo sapiens (Human).